The chain runs to 360 residues: Peptide chain release factor 1 (360 aa).

Gln-235 carries the post-translational modification N5-methylglutamine. The segment at 284–304 is disordered; sequence KVDSERSADRKSQVGSGDRSE.

It belongs to the prokaryotic/mitochondrial release factor family. In terms of processing, methylated by PrmC. Methylation increases the termination efficiency of RF1.

The protein resides in the cytoplasm. Its function is as follows. Peptide chain release factor 1 directs the termination of translation in response to the peptide chain termination codons UAG and UAA. The chain is Peptide chain release factor 1 from Agrobacterium fabrum (strain C58 / ATCC 33970) (Agrobacterium tumefaciens (strain C58)).